We begin with the raw amino-acid sequence, 374 residues long: Probable phosphoserine aminotransferase (374 aa).

R48 provides a ligand contact to L-glutamate. Residues 82 to 83, W110, T160, D183, and Q206 each bind pyridoxal 5'-phosphate; that span reads AS. The residue at position 207 (K207) is an N6-(pyridoxal phosphate)lysine. 248–249 is a binding site for pyridoxal 5'-phosphate; that stretch reads NT.

This sequence belongs to the class-V pyridoxal-phosphate-dependent aminotransferase family. SerC subfamily. As to quaternary structure, homodimer. The cofactor is pyridoxal 5'-phosphate.

It catalyses the reaction O-phospho-L-serine + 2-oxoglutarate = 3-phosphooxypyruvate + L-glutamate. The enzyme catalyses 4-(phosphooxy)-L-threonine + 2-oxoglutarate = (R)-3-hydroxy-2-oxo-4-phosphooxybutanoate + L-glutamate. The protein operates within amino-acid biosynthesis; L-serine biosynthesis; L-serine from 3-phospho-D-glycerate: step 2/3. It participates in cofactor biosynthesis; pyridoxine 5'-phosphate biosynthesis; pyridoxine 5'-phosphate from D-erythrose 4-phosphate: step 3/5. In terms of biological role, catalyzes the reversible conversion of 3-phosphohydroxypyruvate to phosphoserine and of 3-hydroxy-2-oxo-4-phosphonooxybutanoate to phosphohydroxythreonine. In Dictyostelium discoideum (Social amoeba), this protein is Probable phosphoserine aminotransferase (serC).